The following is a 179-amino-acid chain: Large ribosomal subunit protein uL5 (179 aa).

It belongs to the universal ribosomal protein uL5 family. Part of the 50S ribosomal subunit; part of the 5S rRNA/L5/L18/L25 subcomplex. Contacts the 5S rRNA and the P site tRNA. Forms a bridge to the 30S subunit in the 70S ribosome.

This is one of the proteins that bind and probably mediate the attachment of the 5S RNA into the large ribosomal subunit, where it forms part of the central protuberance. In the 70S ribosome it contacts protein S13 of the 30S subunit (bridge B1b), connecting the 2 subunits; this bridge is implicated in subunit movement. Contacts the P site tRNA; the 5S rRNA and some of its associated proteins might help stabilize positioning of ribosome-bound tRNAs. The sequence is that of Large ribosomal subunit protein uL5 from Bacillus cereus (strain 03BB102).